Here is a 683-residue protein sequence, read N- to C-terminus: Elongation factor G-like protein (683 aa).

A tr-type G domain is found at 5–267; it reads QNVRSAALIG…YLGDIGVSPE (263 aa). Residues 14 to 21, 73 to 77, and 127 to 130 each bind GTP; these read GHNGSGKS, DTPGF, and NQMD.

The protein belongs to the TRAFAC class translation factor GTPase superfamily. Classic translation factor GTPase family. EF-G/EF-2 subfamily.

The polypeptide is Elongation factor G-like protein (Thermotoga maritima (strain ATCC 43589 / DSM 3109 / JCM 10099 / NBRC 100826 / MSB8)).